Reading from the N-terminus, the 430-residue chain is Enolase (430 aa).

Residue Gln163 participates in (2R)-2-phosphoglycerate binding. Glu205 functions as the Proton donor in the catalytic mechanism. Mg(2+)-binding residues include Asp242, Glu287, and Asp314. Residues Lys339, Arg368, Ser369, and Lys390 each contribute to the (2R)-2-phosphoglycerate site. The active-site Proton acceptor is Lys339.

Belongs to the enolase family. Requires Mg(2+) as cofactor.

It is found in the cytoplasm. The protein resides in the secreted. It localises to the cell surface. It catalyses the reaction (2R)-2-phosphoglycerate = phosphoenolpyruvate + H2O. Its pathway is carbohydrate degradation; glycolysis; pyruvate from D-glyceraldehyde 3-phosphate: step 4/5. Catalyzes the reversible conversion of 2-phosphoglycerate (2-PG) into phosphoenolpyruvate (PEP). It is essential for the degradation of carbohydrates via glycolysis. The chain is Enolase from Alkaliphilus metalliredigens (strain QYMF).